Reading from the N-terminus, the 160-residue chain is Large ribosomal subunit protein uL15 (160 aa).

Over residues methionine 1–glycine 11 the composition is skewed to basic and acidic residues. The segment at methionine 1–lysine 39 is disordered. The span at arginine 21–valine 35 shows a compositional bias: gly residues.

It belongs to the universal ribosomal protein uL15 family. As to quaternary structure, part of the 50S ribosomal subunit.

In terms of biological role, binds to the 23S rRNA. The polypeptide is Large ribosomal subunit protein uL15 (Granulibacter bethesdensis (strain ATCC BAA-1260 / CGDNIH1)).